The following is a 341-amino-acid chain: General L-amino acid-binding periplasmic protein AapJ (341 aa).

The N-terminal stretch at 1–23 (MKNKLLSAAIGAAVLAVGASAAS) is a signal peptide.

Belongs to the bacterial solute-binding protein 3 family. As to quaternary structure, the complex is composed of two ATP-binding proteins (AapP), two transmembrane proteins (AapM and AapQ) and a solute-binding protein (AapJ).

Its subcellular location is the periplasm. Part of the ABC transporter complex AapJQMP involved in uptake of L-amino acids. Affects the efflux of these amino acids as well. Essential for the development of bacteroids, the differentiated legume-symbiotic forms of this bacterium, and for the effective N(2) fixation by them. The chain is General L-amino acid-binding periplasmic protein AapJ (aapJ) from Rhizobium johnstonii (strain DSM 114642 / LMG 32736 / 3841) (Rhizobium leguminosarum bv. viciae).